The sequence spans 450 residues: MSDSGTLSLIGGIVFLVLWVVVWSICLLGWRTARIRYAHPNIPSRLSKLPVSSAPGVTIIRPLCGLDQNLYNTLESVMKLDYPKFEVIFAVQDEKDEALPVVNMVMEKYPEVEAKVIIDSRKVGVNPKVNNLMTPFQEAKYDLLWILDSTCSVLPGTLGRSVEAFFSNTSSTASPYDPESSPLLSISDDVRKPPIAGEVGLVHQVPIAVCYQKTWGSLIEQAYLNTTHAKMYLAINATSIDSCVVGKSCMYSRDNISHLTTPSPSLRSLPDPPSGLAGFGPFLAEDNMIGLSLWHELKLKHAMTSDVVLDFIGSLSVRDYINRRVRWIRVRKKMTLAATLLEPLTESIISGLYGAWAISRLLGGNILPLFLLHMAAWISVDISTKRALETNIKGIGPPESKVTFLMAWAARECLALPIWMLAMTSSEVVWRGQKYKIIASGEAIRLGDRN.

The Lumenal portion of the chain corresponds to 1 to 8 (MSDSGTLS). The helical transmembrane segment at 9 to 29 (LIGGIVFLVLWVVVWSICLLG) threads the bilayer. At 30-337 (WRTARIRYAH…IRVRKKMTLA (308 aa)) the chain is on the cytoplasmic side. Position 96 (aspartate 96) is a short sequence motif, D1. Residue aspartate 148 is a short sequence motif, D2. Residue aspartate 286 is a short sequence motif, D3. Aspartate 286 acts as the Proton acceptor in catalysis. The (Q/R)XXRW motif lies at 323-327 (RRVRW). Residues 338–358 (ATLLEPLTESIISGLYGAWAI) traverse the membrane as a helical segment. Residues 359 to 361 (SRL) lie on the Lumenal side of the membrane. Residues 362-382 (LGGNILPLFLLHMAAWISVDI) traverse the membrane as a helical segment. Topologically, residues 383–401 (STKRALETNIKGIGPPESK) are cytoplasmic. The chain crosses the membrane as a helical span at residues 402 to 422 (VTFLMAWAARECLALPIWMLA). The Lumenal portion of the chain corresponds to 423 to 450 (MTSSEVVWRGQKYKIIASGEAIRLGDRN).

Belongs to the glycosyltransferase 2 family.

It is found in the golgi apparatus membrane. The catalysed reaction is an N-acylsphing-4-enine + UDP-alpha-D-glucose = a beta-D-glucosyl-(1&lt;-&gt;1')-N-acylsphing-4-enine + UDP + H(+). Its pathway is lipid metabolism; sphingolipid metabolism. Catalyzes the final step in the biosynthesis of the membrane lipid glucosylceramide (GluCer), the transfer of glucose to ceramide. Glucosylceramides play important roles in growth, differentiation and pathogenicity. Essential factor in determining the success of fungal infection by regulating survival of yeast cells during the initial colonization of the host lung. This chain is Ceramide glucosyltransferase, found in Cryptococcus neoformans var. grubii serotype A (strain H99 / ATCC 208821 / CBS 10515 / FGSC 9487) (Filobasidiella neoformans var. grubii).